A 376-amino-acid chain; its full sequence is Methionine import ATP-binding protein MetN 2 (376 aa).

The 240-residue stretch at 34 to 273 (VRFINLGKTY…PQHDVSKTLL (240 aa)) folds into the ABC transporter domain. 70–77 (GRSGAGKS) serves as a coordination point for ATP.

Belongs to the ABC transporter superfamily. Methionine importer (TC 3.A.1.24) family. The complex is composed of two ATP-binding proteins (MetN), two transmembrane proteins (MetI) and a solute-binding protein (MetQ).

It localises to the cell inner membrane. The catalysed reaction is L-methionine(out) + ATP + H2O = L-methionine(in) + ADP + phosphate + H(+). The enzyme catalyses D-methionine(out) + ATP + H2O = D-methionine(in) + ADP + phosphate + H(+). Part of the ABC transporter complex MetNIQ involved in methionine import. Responsible for energy coupling to the transport system. The chain is Methionine import ATP-binding protein MetN 2 from Pseudomonas savastanoi pv. phaseolicola (strain 1448A / Race 6) (Pseudomonas syringae pv. phaseolicola (strain 1448A / Race 6)).